The primary structure comprises 203 residues: MHKAPESVLNALVPMVVEQTAKGERSYDIYSRLLKERVIFLVGQVEEHMANLIVAQLLFLESESPDKDIYLYINSPGGSVTAGMAIYDTMQFIKPNVSTVCIGQAASMGAFLLAGGAKGKRHCLPNSRVMIHQPLGGFQGQASDIAIHAQEILGIKNKLNQMLAEHTGQPLEVIERDTDRDNFMSATQAMDYGLVDSLLTSRS.

The active-site Nucleophile is serine 107. Histidine 132 is a catalytic residue.

The protein belongs to the peptidase S14 family. As to quaternary structure, fourteen ClpP subunits assemble into 2 heptameric rings which stack back to back to give a disk-like structure with a central cavity, resembling the structure of eukaryotic proteasomes.

Its subcellular location is the cytoplasm. It carries out the reaction Hydrolysis of proteins to small peptides in the presence of ATP and magnesium. alpha-casein is the usual test substrate. In the absence of ATP, only oligopeptides shorter than five residues are hydrolyzed (such as succinyl-Leu-Tyr-|-NHMec, and Leu-Tyr-Leu-|-Tyr-Trp, in which cleavage of the -Tyr-|-Leu- and -Tyr-|-Trp bonds also occurs).. In terms of biological role, cleaves peptides in various proteins in a process that requires ATP hydrolysis. Has a chymotrypsin-like activity. Plays a major role in the degradation of misfolded proteins. In Shewanella denitrificans (strain OS217 / ATCC BAA-1090 / DSM 15013), this protein is ATP-dependent Clp protease proteolytic subunit.